The primary structure comprises 292 residues: Ribosomal RNA small subunit methyltransferase A (292 aa).

S-adenosyl-L-methionine is bound by residues N46, L48, G73, E94, D118, and N136.

This sequence belongs to the class I-like SAM-binding methyltransferase superfamily. rRNA adenine N(6)-methyltransferase family. RsmA subfamily.

It is found in the cytoplasm. The catalysed reaction is adenosine(1518)/adenosine(1519) in 16S rRNA + 4 S-adenosyl-L-methionine = N(6)-dimethyladenosine(1518)/N(6)-dimethyladenosine(1519) in 16S rRNA + 4 S-adenosyl-L-homocysteine + 4 H(+). Specifically dimethylates two adjacent adenosines (A1518 and A1519) in the loop of a conserved hairpin near the 3'-end of 16S rRNA in the 30S particle. May play a critical role in biogenesis of 30S subunits. The protein is Ribosomal RNA small subunit methyltransferase A of Deinococcus radiodurans (strain ATCC 13939 / DSM 20539 / JCM 16871 / CCUG 27074 / LMG 4051 / NBRC 15346 / NCIMB 9279 / VKM B-1422 / R1).